We begin with the raw amino-acid sequence, 387 residues long: Acyl-CoA dehydrogenase FadE29 (387 aa).

Residues 123-126, threonine 132, and threonine 158 contribute to the FAD site; that span reads IGYT. Residue glutamate 241 is the Proton acceptor of the active site. 367–369 serves as a coordination point for FAD; it reads VNE.

Belongs to the acyl-CoA dehydrogenase family. Heterotetramer composed of FadE28 and FadE29. FAD is required as a cofactor.

It catalyses the reaction 3-oxochol-4-en-22-oyl-CoA + A = 3-oxochola-4,17-dien-22-oyl-CoA + AH2. The protein operates within steroid metabolism; cholesterol degradation. Functionally, involved in the third cycle of side chain dehydrogenation in the beta-oxidation of cholesterol catabolism. Contributes partly to the virulence by increasing the efficiency of beta-oxidation. Catalyzes the dehydrogenation of 2'-propanoyl-CoA ester side chains of 3-oxo-4-pregnene-20-carboxyl-CoA (3-OPC-CoA) to yield 3-oxo-4,17-pregnadiene-20-carboxyl-CoA (3-OPDC-CoA). Also able to dehydrogenate steroyl-CoA such as 3-oxo-chol-4-en-24-oyl-CoA (3-OCO-CoA), 1beta-(2'-propanoyl-CoA)-3a-alpha-H- 7a-beta-methylhexahydro-4-indanone (indanone-CoA ester), hexahydroindanone and pregenenone. This chain is Acyl-CoA dehydrogenase FadE29 (fadE29), found in Mycobacterium tuberculosis (strain ATCC 25618 / H37Rv).